Consider the following 474-residue polypeptide: tRNA-2-methylthio-N(6)-dimethylallyladenosine synthase (474 aa).

The 118-residue stretch at 3-120 folds into the MTTase N-terminal domain; sequence QKLHIKTWGC…LPEMINQIRG (118 aa). Residues C12, C49, C83, C157, C161, and C164 each coordinate [4Fe-4S] cluster. The Radical SAM core domain occupies 143-375; that stretch reads RAEGPTAFVS…QERINQQAAQ (233 aa). Residues 378-441 form the TRAM domain; it reads RRMLGTEQRV…TNSLRGEVVR (64 aa).

Belongs to the methylthiotransferase family. MiaB subfamily. As to quaternary structure, monomer. Requires [4Fe-4S] cluster as cofactor.

The protein resides in the cytoplasm. The enzyme catalyses N(6)-dimethylallyladenosine(37) in tRNA + (sulfur carrier)-SH + AH2 + 2 S-adenosyl-L-methionine = 2-methylsulfanyl-N(6)-dimethylallyladenosine(37) in tRNA + (sulfur carrier)-H + 5'-deoxyadenosine + L-methionine + A + S-adenosyl-L-homocysteine + 2 H(+). Its function is as follows. Catalyzes the methylthiolation of N6-(dimethylallyl)adenosine (i(6)A), leading to the formation of 2-methylthio-N6-(dimethylallyl)adenosine (ms(2)i(6)A) at position 37 in tRNAs that read codons beginning with uridine. This is tRNA-2-methylthio-N(6)-dimethylallyladenosine synthase from Haemophilus influenzae (strain PittGG).